The following is a 304-amino-acid chain: Protein ML (304 aa).

Functionally, blocks host IRF3 and IRF7, thereby inhibiting IFN-beta expression and activation of host antiviral state. This chain is Protein ML, found in Thogoto virus (isolate SiAr 126) (Tho).